Here is a 1002-residue protein sequence, read N- to C-terminus: MLRAAAAAAAVFPSRFAAAPAVAAVEEVRSPLLRVLGALRGGRVSTLGRRARFCSNSAGSDSEAAAAEAKAEDAVAAEGEADGKASSAIVPTVLRPEDCLSVIALPLPHRPLFPGFYMPIYVKDQKLLQALVENRKRSIPYAGAFLVKDEEGTDPNIVTSSDSDKSIDDLKGKELLQRLNEVGTLAQITSIQGDQVVLLGHRRLKITEMVQEDPLTVKVDHLKEKPYDKDDDVIKATSFEVISTLREVLKASSLWKDHVQTYTQHMGDFNYPRLADFGAAISGANKFLCQEVLEELDVYKRLKLTLELVKKEMEISKLQQSIAKAIEEKISGDQRRYLLNEQLKAIKKELGLETDDKTALSAKFRERIEAKKEKCPAHVLQVIEEELTKLQLLEASSSEFNVTRNYLDWLTVLPWGNYSDENFDVHHAQQILDEDHYGLSDVKERILEFIAVGKLRGTSQGKIICLSGPPGVGKTSIGRSIARALNRKFYRFSVGGLADVAEIKGHRRTYVGAMPGKMVQCLKSVGTANPLVLIDEIDKLGRGHSGDPASALLELLDPEQNVNFLDHYLDVPIDLSKVLFVCTANVIEMIPNPLLDRMEIIAIAGYITDEKMHIARDYLEKNTREACGIKPEQAEVTDAALLALIESYCREAGVRNLQKQIEKIYRKIALQLVRQGVSNEPTQEAAIVTASEEPNGGDSANKLKDETMEDPATENAAMTNADTASKEASELDLLNRTVDHDVHPAETPKEAVLTDSALSTDKLCTPEGNKDMEGAKEESADKAVEKVVIDSSNLGDYVGKPVFQAERIYEQTPVGVVMGLAWTAMGGSTLYIETTKVEEGDGKGALVMTGQLGDVMKESAQIAHTVGRAILLDKEPENLFFANSKVHLHVPAGSTPKDGPSAGCTMITSMLSLAMGKPVKKDLAMTGEVTLTGRILPIGGVKEKTIAARRSAVKTIVFPAANKRDFDELAPNVKEGLEVHFVDTYNEIFDIAFQSETQTETS.

In terms of domain architecture, Lon N-terminal spans 102–313 (VIALPLPHRP…LTLELVKKEM (212 aa)). Residue 468 to 475 (GPPGVGKT) participates in ATP binding. In terms of domain architecture, Lon proteolytic spans 811–995 (QTPVGVVMGL…NEIFDIAFQS (185 aa)). Catalysis depends on residues Ser901 and Lys944.

Belongs to the peptidase S16 family. In terms of assembly, homohexamer or homoheptamer. Organized in a ring with a central cavity.

The protein localises to the mitochondrion matrix. It carries out the reaction Hydrolysis of proteins in presence of ATP.. Functionally, ATP-dependent serine protease that mediates the selective degradation of misfolded, unassembled or oxidatively damaged polypeptides as well as certain short-lived regulatory proteins in the mitochondrial matrix. May also have a chaperone function in the assembly of inner membrane protein complexes. Participates in the regulation of mitochondrial gene expression and in the maintenance of the integrity of the mitochondrial genome. Binds to mitochondrial DNA in a site-specific manner. In Oryza sativa subsp. japonica (Rice), this protein is Lon protease homolog, mitochondrial.